A 304-amino-acid chain; its full sequence is tRNA dimethylallyltransferase (304 aa).

Residue 8–15 participates in ATP binding; that stretch reads GPTASGKS. 10-15 lines the substrate pocket; sequence TASGKS. The segment at 33–36 is interaction with substrate tRNA; the sequence is DSRQ.

Belongs to the IPP transferase family. Monomer. The cofactor is Mg(2+).

The enzyme catalyses adenosine(37) in tRNA + dimethylallyl diphosphate = N(6)-dimethylallyladenosine(37) in tRNA + diphosphate. Catalyzes the transfer of a dimethylallyl group onto the adenine at position 37 in tRNAs that read codons beginning with uridine, leading to the formation of N6-(dimethylallyl)adenosine (i(6)A). This is tRNA dimethylallyltransferase from Chlorobium luteolum (strain DSM 273 / BCRC 81028 / 2530) (Pelodictyon luteolum).